The following is a 190-amino-acid chain: Putative histone H1.6 (190 aa).

Positions 1 to 29 (MSDVAVAETPAVKTPTKAPKANATKVPKV) are disordered. N-acetylserine is present on Ser2. Residues 9 to 29 (TPAVKTPTKAPKANATKVPKV) show a composition bias toward low complexity. An H15 domain is found at 34-110 (AHPPFINMVT…GATGRFRVAE (77 aa)). The segment at 141–190 (KKTGDKVKKAKSPKKIAKPAAKKATKSPSKKVAPKKAAAKPAKKTAALKA) is disordered. Positions 148 to 183 (KKAKSPKKIAKPAAKKATKSPSKKVAPKKAAAKPAK) are enriched in basic residues.

Belongs to the histone H1/H5 family.

The protein resides in the nucleus. The protein localises to the chromosome. Functionally, histones H1 are necessary for the condensation of nucleosome chains into higher-order structures. The protein is Putative histone H1.6 (hil-6) of Caenorhabditis elegans.